Consider the following 156-residue polypeptide: RNA polymerase sigma factor SigS (156 aa).

Residues 29-44 carry the Polymerase core binding motif; it reads EYYQLLLIKMWQLSQI. Residues 126–145 constitute a DNA-binding region (H-T-H motif); sequence QFEIAEIMSLSLSTIKLIKM.

It belongs to the sigma-70 factor family.

Functionally, sigma factors are initiation factors that promote the attachment of RNA polymerase to specific initiation sites and are then released. Sigma-S contributes to the protection against external stress, thus playing a role in cellular fitness and survival. The sequence is that of RNA polymerase sigma factor SigS (sigS) from Staphylococcus aureus (strain NCTC 8325 / PS 47).